The chain runs to 320 residues: Sliding-clamp-loader large subunit (320 aa).

Residues 12–15, Ile24, 53–58, and Arg205 each bind ATP; these read EQKY and GTGKTT.

The protein belongs to the Tevenvirinae sliding-clamp-loader large subunit family. As to quaternary structure, the sliding-clamp-loader consists of 4 large subunits and 1 small subunit. Interacts with the sliding clamp; this interaction allows the sliding-clamp-loader to open the sliding clamp. Part of the replicase complex that includes the DNA polymerase, the polymerase clamp, the clamp loader complex, the single-stranded DNA binding protein, the primase, the helicase and the helicase assembly factor.

Forms the sliding-clamp-loader together with the small subunit. Functions as an ATPase enzyme. The clamp loader holds the clamp in an open conformation and places it onto the DNA. 4 ATP molecules must bind to the sliding-clamp-loader before the latter can open the sliding clamp. ATP hydrolysis triggers the detachment of the sliding clamp from the sliding-clamp-loader, freeing the sliding clamp to track along DNA. This Escherichia phage RB69 (Bacteriophage RB69) protein is Sliding-clamp-loader large subunit (44).